Consider the following 538-residue polypeptide: MTTSLQDGQSAAGRAGAQDSPLAVQVCRVAQGKGDAQDPAQVPGLHALSPASDATLRGAIDRRKMKDLDVLEKPPIPNPFPELCCSPLTSVLSAGLFPRANSRKKQVIKVYSEDETSRALEVPSDITARDVCQLLILKNHYVDDNSWTLFEHLSHIGLERTVEDHELPTEVLSHWGVEEDNKLYLRKNYAKYEFFKNPMYFFPEHMVSFAAEMNGDRSPTQILQVFLSSSTYPEIHGFLHAKEQGKKSWKKAYFFLRRSGLYFSTKGTSKEPRHLQLFSEFSTSHVYMSLAGKKKHGAPTPYGFCLKPNKAGGPRDLKMLCAEEEQSRTCWVTAIRLLKDGMQLYQNYMHPYQGRSACNSQSMSPMRSVSENSLVAMDFSGEKSRVIDNPTEALSVAVEEGLAWRKKGCLRLGNHGSPSAPSQSSAVNMALHRSQPWFHHRISRDEAQRLIIRQGPVDGVFLVRDSQSNPRTFVLSMSHGQKIKHYQIIPVEDDGELFHTLDDGHTKFTDLIQLVEFYQLNRGVLPCKLKHYCARMAV.

The segment at Met-1 to Ser-20 is disordered. Thr-2 is subject to N-acetylthreonine. Positions Lys-104–Ala-190 constitute a Ras-associating domain. The 109-residue stretch at Tyr-232–Asp-340 folds into the PH domain. Phosphoserine is present on residues Ser-370 and Ser-373. The region spanning Trp-437–Cys-533 is the SH2 domain.

It belongs to the GRB7/10/14 family. In terms of assembly, interacts with the cytoplasmic domain of the autophosphorylated insulin receptor, through the SH2 domain. Interacts with GRB14 (via BPS domain); this interaction protects the tyrosines in the activation loop on INSR from dephosphorylation. Binds to the ankyrin repeat region of TNKS2 via its N-terminus. Interacts with activated NRAS. Interacts (via SH2 domain) with TEK/TIE2 (tyrosine phosphorylated). In terms of processing, phosphorylated on serine residues. Phosphorylated on tyrosine residues by TEK/TIE2.

Its subcellular location is the cytoplasm. The protein resides in the endosome membrane. In terms of biological role, adapter protein which modulates coupling of cell surface receptor kinases with specific signaling pathways. Binds to, and suppresses signals from, the activated insulin receptor (INSR). Potent inhibitor of insulin-stimulated MAPK3 phosphorylation. Plays a critical role regulating PDPK1 membrane translocation in response to insulin stimulation and serves as an adapter protein to recruit PDPK1 to activated insulin receptor, thus promoting PKB/AKT1 phosphorylation and transduction of the insulin signal. This chain is Growth factor receptor-bound protein 14 (Grb14), found in Mus musculus (Mouse).